An 829-amino-acid chain; its full sequence is Periplasmic nitrate reductase (829 aa).

An N-terminal signal peptide occupies residues 1-30; the sequence is MNSPRPTPPPFAAAAAGLPILVRASNLVTE. The 57-residue stretch at 36–92 folds into the 4Fe-4S Mo/W bis-MGD-type domain; sequence LVWNKAPCRFCGTGCSVMVATRDGQVVATHGDIKAEVNRGINCVKGYFLSKIMYGSD. The [4Fe-4S] cluster site is built by cysteine 43, cysteine 46, cysteine 50, and cysteine 78. Residues lysine 80, glutamine 147, asparagine 172, cysteine 176, 209-216, 240-244, 259-261, methionine 370, glutamine 374, asparagine 480, 506-507, lysine 529, aspartate 556, and 716-725 each bind Mo-bis(molybdopterin guanine dinucleotide); these read WGSNMAEM, STFEH, QTD, SD, and TGRVLEHWHT. Phenylalanine 792 provides a ligand contact to substrate. Mo-bis(molybdopterin guanine dinucleotide) is bound by residues asparagine 800 and lysine 817.

Belongs to the prokaryotic molybdopterin-containing oxidoreductase family. NasA/NapA/NarB subfamily. As to quaternary structure, component of the periplasmic nitrate reductase NapAB complex composed of NapA and NapB. Requires [4Fe-4S] cluster as cofactor. The cofactor is Mo-bis(molybdopterin guanine dinucleotide).

It localises to the periplasm. It catalyses the reaction 2 Fe(II)-[cytochrome] + nitrate + 2 H(+) = 2 Fe(III)-[cytochrome] + nitrite + H2O. In terms of biological role, catalytic subunit of the periplasmic nitrate reductase complex NapAB. Receives electrons from NapB and catalyzes the reduction of nitrate to nitrite. This Pseudomonas aeruginosa (strain ATCC 15692 / DSM 22644 / CIP 104116 / JCM 14847 / LMG 12228 / 1C / PRS 101 / PAO1) protein is Periplasmic nitrate reductase.